The chain runs to 299 residues: GTPase Era (299 aa).

Positions 5–172 (KSGFVSIIGR…IDVLKSFLPE (168 aa)) constitute an Era-type G domain. A G1 region spans residues 13 to 20 (GRPNVGKS). 13–20 (GRPNVGKS) serves as a coordination point for GTP. The G2 stretch occupies residues 39–43 (QTTRN). A G3 region spans residues 60-63 (DTPG). GTP contacts are provided by residues 60–64 (DTPGI) and 122–125 (NKID). Residues 122-125 (NKID) form a G4 region. A G5 region spans residues 151–153 (ISA). One can recognise a KH type-2 domain in the interval 203-280 (TSEEIPHAIG…YLELWVKVQR (78 aa)).

This sequence belongs to the TRAFAC class TrmE-Era-EngA-EngB-Septin-like GTPase superfamily. Era GTPase family. In terms of assembly, monomer.

It localises to the cytoplasm. The protein localises to the cell membrane. In terms of biological role, an essential GTPase that binds both GDP and GTP, with rapid nucleotide exchange. Plays a role in 16S rRNA processing and 30S ribosomal subunit biogenesis and possibly also in cell cycle regulation and energy metabolism. The sequence is that of GTPase Era from Staphylococcus epidermidis (strain ATCC 35984 / DSM 28319 / BCRC 17069 / CCUG 31568 / BM 3577 / RP62A).